The primary structure comprises 196 residues: Peptidyl-tRNA hydrolase (196 aa).

Tyr17 contacts tRNA. His22 acts as the Proton acceptor in catalysis. TRNA is bound by residues Phe68, Asn70, and Asn116.

The protein belongs to the PTH family. In terms of assembly, monomer.

It localises to the cytoplasm. It carries out the reaction an N-acyl-L-alpha-aminoacyl-tRNA + H2O = an N-acyl-L-amino acid + a tRNA + H(+). Hydrolyzes ribosome-free peptidyl-tRNAs (with 1 or more amino acids incorporated), which drop off the ribosome during protein synthesis, or as a result of ribosome stalling. Functionally, catalyzes the release of premature peptidyl moieties from peptidyl-tRNA molecules trapped in stalled 50S ribosomal subunits, and thus maintains levels of free tRNAs and 50S ribosomes. The polypeptide is Peptidyl-tRNA hydrolase (Photorhabdus laumondii subsp. laumondii (strain DSM 15139 / CIP 105565 / TT01) (Photorhabdus luminescens subsp. laumondii)).